The primary structure comprises 398 residues: Phosphoglycerate kinase (398 aa).

Substrate contacts are provided by residues D20–N22, R35, H58–R61, R118, and R155. ATP is bound by residues K206, G295, E326, and G354–S357.

It belongs to the phosphoglycerate kinase family. As to quaternary structure, monomer.

The protein localises to the cytoplasm. The enzyme catalyses (2R)-3-phosphoglycerate + ATP = (2R)-3-phospho-glyceroyl phosphate + ADP. It participates in carbohydrate degradation; glycolysis; pyruvate from D-glyceraldehyde 3-phosphate: step 2/5. The protein is Phosphoglycerate kinase of Onion yellows phytoplasma (strain OY-M).